The primary structure comprises 194 residues: CASP-like protein 4C1 (194 aa).

The Cytoplasmic portion of the chain corresponds to 1–35; that stretch reads MRSPHAFRNGESPTLRDHTHFHSTVTAQKLRRFNS. The helical transmembrane segment at 36–56 threads the bilayer; it reads LILLLRLASFSFSLASAVFML. At 57-74 the chain is on the extracellular side; the sequence is TNSRGSASPHWYDFDAFR. The helical transmembrane segment at 75 to 95 threads the bilayer; that stretch reads FVFVANAIVALYSVFEMGTCV. At 96 to 114 the chain is on the cytoplasmic side; the sequence is WEFSRETTLWPEAFQVWFD. The helical transmembrane segment at 115 to 135 threads the bilayer; the sequence is FGHDQVFSYLLLSAGSAAAAL. Topologically, residues 136–157 are extracellular; it reads ARTMRGGDTCTANKAFCLQSDV. A helical transmembrane segment spans residues 158–178; it reads AIGLGFAAFLFLAFSSCFSGF. The Cytoplasmic segment spans residues 179–194; sequence RVACFLITGSRFHLYS.

The protein belongs to the Casparian strip membrane proteins (CASP) family. As to quaternary structure, homodimer and heterodimers.

It localises to the cell membrane. This is CASP-like protein 4C1 from Arabidopsis thaliana (Mouse-ear cress).